A 34-amino-acid polypeptide reads, in one-letter code: MENNSRTMPHIRRTTHIMKFAHRNSFDFHFFNAR.

Residues 1 to 13 (MENNSRTMPHIRR) are sensor domain. An Ornithine recognition loop motif is present at residues 10 to 16 (HIRRTTH). Arg13 serves as a coordination point for L-ornithine. An effector domain region spans residues 14–34 (TTHIMKFAHRNSFDFHFFNAR).

The protein belongs to the speF operon leader peptide family. Binds ornithine in stalled 70S ribosomes, blocking the upper two-thirds of the exit tunnel. Contacts 23S rRNA and ribosomal proteins L4 and L22.

Functionally, a small protein (arrest peptide) encoded upstream of inducible ornithine carboxylase gene (speF) that controls expression of downstream genes (speF and patE) by nascent chain-translational arrest and transcriptional attenuation. In the presence of ornithine a toeprint due to ribosomal arrest can be seen on the speFL transcript. Only L-ornithine (not other tested amino acids) has this effect. It is thought that in the presence of ornithine, ribosomal stalling on speFL prevents binding of Rho transcription termination factor to a downstream rut site allowing transcription of the operon. In the absence of ornithine, ribosomes terminate translation and are recycled, exposing the rut site allowing Rho to bind and prematurely terminate transcription. The presence of a pair of rare Arg codons could slow down translation to prevent polysome accumulation and to expose the rut site to Rho. The polypeptide is Leader peptide SpeFL (Escherichia coli (strain K12)).